The primary structure comprises 123 residues: Holo-[acyl-carrier-protein] synthase (123 aa).

Mg(2+) is bound by residues D7 and E56.

The protein belongs to the P-Pant transferase superfamily. AcpS family. It depends on Mg(2+) as a cofactor.

Its subcellular location is the cytoplasm. It catalyses the reaction apo-[ACP] + CoA = holo-[ACP] + adenosine 3',5'-bisphosphate + H(+). Transfers the 4'-phosphopantetheine moiety from coenzyme A to a Ser of acyl-carrier-protein. The chain is Holo-[acyl-carrier-protein] synthase from Carboxydothermus hydrogenoformans (strain ATCC BAA-161 / DSM 6008 / Z-2901).